The sequence spans 80 residues: Translational regulator CsrA (80 aa).

This sequence belongs to the CsrA/RsmA family. As to quaternary structure, homodimer; the beta-strands of each monomer intercalate to form a hydrophobic core, while the alpha-helices form wings that extend away from the core.

It is found in the cytoplasm. Its function is as follows. A translational regulator that binds mRNA to regulate translation initiation and/or mRNA stability. Usually binds in the 5'-UTR at or near the Shine-Dalgarno sequence preventing ribosome-binding, thus repressing translation. Its main target seems to be the major flagellin gene, while its function is anatagonized by FliW. The protein is Translational regulator CsrA of Desulforamulus reducens (strain ATCC BAA-1160 / DSM 100696 / MI-1) (Desulfotomaculum reducens).